Reading from the N-terminus, the 521-residue chain is Probable protein kinase UbiB (521 aa).

The 379-residue stretch at 119-497 (SFDRQPVASA…QKRTNRLLQS (379 aa)) folds into the Protein kinase domain. ATP is bound by residues 125–133 (VASASIAQV) and Lys-151. The Proton acceptor role is filled by Asp-286. A helical membrane pass occupies residues 496–516 (QSLIYGGLGFVLGLLVMQLFV).

Belongs to the ABC1 family. UbiB subfamily.

The protein localises to the cell inner membrane. It functions in the pathway cofactor biosynthesis; ubiquinone biosynthesis [regulation]. Is probably a protein kinase regulator of UbiI activity which is involved in aerobic coenzyme Q (ubiquinone) biosynthesis. The sequence is that of Probable protein kinase UbiB from Acidovorax sp. (strain JS42).